We begin with the raw amino-acid sequence, 176 residues long: Inorganic pyrophosphatase (176 aa).

Substrate is bound by residues Lys30, Arg44, and Tyr56. 3 residues coordinate Mg(2+): Asp66, Asp71, and Asp103. Residue Tyr142 coordinates substrate.

This sequence belongs to the PPase family. As to quaternary structure, homohexamer. The cofactor is Mg(2+).

It is found in the cytoplasm. The catalysed reaction is diphosphate + H2O = 2 phosphate + H(+). Its function is as follows. Catalyzes the hydrolysis of inorganic pyrophosphate (PPi) forming two phosphate ions. The sequence is that of Inorganic pyrophosphatase from Vibrio cholerae serotype O1 (strain ATCC 39315 / El Tor Inaba N16961).